Reading from the N-terminus, the 720-residue chain is Phosphoribosylformylglycinamidine synthase subunit PurL (720 aa).

His34 is a catalytic residue. Tyr37 provides a ligand contact to ATP. Position 83 (Glu83) interacts with Mg(2+). Residues 84-87 and Arg106 contribute to the substrate site; that span reads SHNH. The Proton acceptor role is filled by His85. A Mg(2+)-binding site is contributed by Asp107. Position 231 (Gln231) interacts with substrate. Residue Asp259 participates in Mg(2+) binding. Residue 303-305 participates in substrate binding; that stretch reads ESQ. ATP contacts are provided by Asp480 and Gly517. Asn518 contacts Mg(2+). Residue Ser520 coordinates substrate.

This sequence belongs to the FGAMS family. In terms of assembly, monomer. Part of the FGAM synthase complex composed of 1 PurL, 1 PurQ and 2 PurS subunits.

The protein resides in the cytoplasm. It catalyses the reaction N(2)-formyl-N(1)-(5-phospho-beta-D-ribosyl)glycinamide + L-glutamine + ATP + H2O = 2-formamido-N(1)-(5-O-phospho-beta-D-ribosyl)acetamidine + L-glutamate + ADP + phosphate + H(+). The protein operates within purine metabolism; IMP biosynthesis via de novo pathway; 5-amino-1-(5-phospho-D-ribosyl)imidazole from N(2)-formyl-N(1)-(5-phospho-D-ribosyl)glycinamide: step 1/2. Its function is as follows. Part of the phosphoribosylformylglycinamidine synthase complex involved in the purines biosynthetic pathway. Catalyzes the ATP-dependent conversion of formylglycinamide ribonucleotide (FGAR) and glutamine to yield formylglycinamidine ribonucleotide (FGAM) and glutamate. The FGAM synthase complex is composed of three subunits. PurQ produces an ammonia molecule by converting glutamine to glutamate. PurL transfers the ammonia molecule to FGAR to form FGAM in an ATP-dependent manner. PurS interacts with PurQ and PurL and is thought to assist in the transfer of the ammonia molecule from PurQ to PurL. The sequence is that of Phosphoribosylformylglycinamidine synthase subunit PurL from Haloarcula marismortui (strain ATCC 43049 / DSM 3752 / JCM 8966 / VKM B-1809) (Halobacterium marismortui).